Consider the following 330-residue polypeptide: Ketol-acid reductoisomerase (NADP(+)) (330 aa).

The region spanning 3–184 (LPVYYDKDID…GGGRMGVLKT (182 aa)) is the KARI N-terminal Rossmann domain. NADP(+) is bound by residues 26–29 (YGAQ), S52, and S54. The active site involves H109. G135 provides a ligand contact to NADP(+). The region spanning 185–329 (SFKEECESDL…EILRAPFNHK (145 aa)) is the KARI C-terminal knotted domain. Residues D193, E197, E229, and E233 each contribute to the Mg(2+) site. S254 is a binding site for substrate.

This sequence belongs to the ketol-acid reductoisomerase family. Mg(2+) serves as cofactor.

The enzyme catalyses (2R)-2,3-dihydroxy-3-methylbutanoate + NADP(+) = (2S)-2-acetolactate + NADPH + H(+). The catalysed reaction is (2R,3R)-2,3-dihydroxy-3-methylpentanoate + NADP(+) = (S)-2-ethyl-2-hydroxy-3-oxobutanoate + NADPH + H(+). It functions in the pathway amino-acid biosynthesis; L-isoleucine biosynthesis; L-isoleucine from 2-oxobutanoate: step 2/4. Its pathway is amino-acid biosynthesis; L-valine biosynthesis; L-valine from pyruvate: step 2/4. Involved in the biosynthesis of branched-chain amino acids (BCAA). Catalyzes an alkyl-migration followed by a ketol-acid reduction of (S)-2-acetolactate (S2AL) to yield (R)-2,3-dihydroxy-isovalerate. In the isomerase reaction, S2AL is rearranged via a Mg-dependent methyl migration to produce 3-hydroxy-3-methyl-2-ketobutyrate (HMKB). In the reductase reaction, this 2-ketoacid undergoes a metal-dependent reduction by NADPH to yield (R)-2,3-dihydroxy-isovalerate. This chain is Ketol-acid reductoisomerase (NADP(+)), found in Helicobacter pylori (strain HPAG1).